The following is a 325-amino-acid chain: Protease HtpX homolog (325 aa).

The chain crosses the membrane as a helical span at residues 20 to 40 (IGYLLGGGGGMMIALVIAVAM). His130 provides a ligand contact to Zn(2+). The active site involves Glu131. His134 lines the Zn(2+) pocket. The next 2 membrane-spanning stretches (helical) occupy residues 145–165 (IVAT…FLGG) and 173–193 (VMGV…AMIV). Glu202 contacts Zn(2+). Positions 288–325 (AMTARAAAPSQNSGPWGQRSDNAGGNSNGGSRYRGPWS) are disordered. Residues 306 to 325 (RSDNAGGNSNGGSRYRGPWS) are compositionally biased toward low complexity.

This sequence belongs to the peptidase M48B family. The cofactor is Zn(2+).

The protein resides in the cell inner membrane. The chain is Protease HtpX homolog from Brucella suis (strain ATCC 23445 / NCTC 10510).